We begin with the raw amino-acid sequence, 637 residues long: tRNA uridine 5-carboxymethylaminomethyl modification enzyme MnmG (637 aa).

Gly-14–Gly-19 contacts FAD. Gly-279 to Phe-293 contributes to the NAD(+) binding site.

Belongs to the MnmG family. In terms of assembly, homodimer. Heterotetramer of two MnmE and two MnmG subunits. The cofactor is FAD.

Its subcellular location is the cytoplasm. NAD-binding protein involved in the addition of a carboxymethylaminomethyl (cmnm) group at the wobble position (U34) of certain tRNAs, forming tRNA-cmnm(5)s(2)U34. The sequence is that of tRNA uridine 5-carboxymethylaminomethyl modification enzyme MnmG from Desulfitobacterium hafniense (strain DSM 10664 / DCB-2).